Here is a 611-residue protein sequence, read N- to C-terminus: Leukotriene A-4 hydrolase (611 aa).

K73 is modified (N6-acetyllysine). A peptide-binding positions include Q135–Q137 and P267–E272. H296 is a binding site for Zn(2+). The active-site Proton acceptor is the E297. Zn(2+) contacts are provided by H300 and E319. K337 carries the post-translational modification N6-acetyllysine. The active-site Proton donor is the Y384. At K414 the chain carries N6-acetyllysine. Phosphoserine is present on S416. R564–K566 contacts a peptide. K573 is subject to N6-acetyllysine.

This sequence belongs to the peptidase M1 family. In terms of assembly, monomer. Requires Zn(2+) as cofactor. Post-translationally, phosphorylation at Ser-416 inhibits leukotriene-A4 hydrolase activity.

The protein resides in the cytoplasm. It carries out the reaction leukotriene A4 + H2O = leukotriene B4. The enzyme catalyses (5S,6S)-epoxy-(18R)-hydroxy-(7E,9E,11Z,14Z,16E)-eicosapentaenoate + H2O = resolvin E1. It catalyses the reaction (5S,6S)-epoxy-(18S)-hydroxy-(7E,9E,11Z,14Z,16E)-eicosapentaenoate + H2O = 18S-resolvin E1. The catalysed reaction is Release of the N-terminal residue from a tripeptide.. It participates in lipid metabolism; leukotriene B4 biosynthesis. With respect to regulation, inhibited by bestatin. Inhibited by captopril. The epoxide hydrolase activity is restrained by suicide inactivation that involves binding of LTA4 to Tyr-379. 4-(4-benzylphenyl)thiazol-2-amine (ARM1) selectively inhibits the epoxide hydrolase activity. Bifunctional zinc metalloenzyme that comprises both epoxide hydrolase (EH) and aminopeptidase activities. Acts as an epoxide hydrolase to catalyze the conversion of LTA4 to the pro-inflammatory mediator leukotriene B4 (LTB4). Also has aminopeptidase activity, with high affinity for N-terminal arginines of various synthetic tripeptides. In addition to its pro-inflammatory EH activity, may also counteract inflammation by its aminopeptidase activity, which inactivates by cleavage another neutrophil attractant, the tripeptide Pro-Gly-Pro (PGP), a bioactive fragment of collagen generated by the action of matrix metalloproteinase-9 (MMP9) and prolylendopeptidase (PREPL). Involved also in the biosynthesis of resolvin E1 and 18S-resolvin E1 from eicosapentaenoic acid, two lipid mediators that show potent anti-inflammatory and pro-resolving actions. The chain is Leukotriene A-4 hydrolase (Lta4h) from Rattus norvegicus (Rat).